We begin with the raw amino-acid sequence, 257 residues long: NAD-capped RNA hydrolase NudC (257 aa).

Arginine 69 contacts substrate. Zn(2+) is bound by residues cysteine 98 and cysteine 101. Glutamate 111 contacts substrate. Residues cysteine 116 and cysteine 119 each contribute to the Zn(2+) site. Tyrosine 124 is a substrate binding site. The Nudix hydrolase domain maps to 125-248 (PQIAPCIIVA…TVARRLIEDT (124 aa)). The a divalent metal cation site is built by alanine 158, glutamate 174, and glutamate 178. The short motif at 159–180 (GFVEVGETLEQAVAREVMEESG) is the Nudix box element. Residue 192–199 (QPWPFPQS) participates in substrate binding. Residue glutamate 219 coordinates a divalent metal cation. Alanine 241 provides a ligand contact to substrate.

The protein belongs to the Nudix hydrolase family. NudC subfamily. Homodimer. It depends on Mg(2+) as a cofactor. Requires Mn(2+) as cofactor. Zn(2+) is required as a cofactor.

The catalysed reaction is a 5'-end NAD(+)-phospho-ribonucleoside in mRNA + H2O = a 5'-end phospho-adenosine-phospho-ribonucleoside in mRNA + beta-nicotinamide D-ribonucleotide + 2 H(+). It carries out the reaction NAD(+) + H2O = beta-nicotinamide D-ribonucleotide + AMP + 2 H(+). The enzyme catalyses NADH + H2O = reduced beta-nicotinamide D-ribonucleotide + AMP + 2 H(+). Its function is as follows. mRNA decapping enzyme that specifically removes the nicotinamide adenine dinucleotide (NAD) cap from a subset of mRNAs by hydrolyzing the diphosphate linkage to produce nicotinamide mononucleotide (NMN) and 5' monophosphate mRNA. The NAD-cap is present at the 5'-end of some mRNAs and stabilizes RNA against 5'-processing. Has preference for mRNAs with a 5'-end purine. Catalyzes the hydrolysis of a broad range of dinucleotide pyrophosphates. The polypeptide is NAD-capped RNA hydrolase NudC (Klebsiella pneumoniae (strain 342)).